A 317-amino-acid chain; its full sequence is Malate dehydrogenase (317 aa).

NAD(+) contacts are provided by residues 13–18 (GAGNIG) and Asp38. The substrate site is built by Arg87 and Arg93. Residues Asn100 and 123 to 125 (VTN) each bind NAD(+). Substrate is bound by residues Asn125 and Arg156. His180 acts as the Proton acceptor in catalysis.

It belongs to the LDH/MDH superfamily. MDH type 3 family.

It carries out the reaction (S)-malate + NAD(+) = oxaloacetate + NADH + H(+). Catalyzes the reversible oxidation of malate to oxaloacetate. The chain is Malate dehydrogenase from Anaplasma marginale (strain St. Maries).